The sequence spans 845 residues: Protein kintoun (845 aa).

Over residues 362 to 382 (SKEQAQMHETLRHFSREDSGV) the composition is skewed to basic and acidic residues. 3 disordered regions span residues 362-420 (SKEQ…PVRH), 575-691 (QALK…SMSD), and 773-845 (AQHR…EMDD). Ser-380 is modified (phosphoserine). Over residues 391–400 (PVEEDPDGEL) the composition is skewed to acidic residues. Over residues 584-593 (GTKEEEKENQ) the composition is skewed to basic and acidic residues. Residues 611–622 (KPGKKQRKRNKK) are compositionally biased toward basic residues. Over residues 640-671 (LTKNSELQPKSTFNLPQRKQRSYSECNDSTGG) the composition is skewed to polar residues. Ser-779 carries the post-translational modification Phosphoserine. The span at 794–804 (LKQQENQSRNC) shows a compositional bias: polar residues.

This sequence belongs to the PIH1 family. Kintoun subfamily. Interacts with Pp1alpha-96A, Pp1-87B, Pp1-13C and flw.

It localises to the cytoplasm. Its function is as follows. Required for cytoplasmic pre-assembly of axonemal dyneins, thereby playing a central role in motility in cilia and flagella. Involved in pre-assembly of dynein arm complexes in the cytoplasm before intraflagellar transport loads them for the ciliary compartment. This chain is Protein kintoun, found in Drosophila erecta (Fruit fly).